Here is a 280-residue protein sequence, read N- to C-terminus: 2-dehydro-3-deoxyphosphooctonate aldolase (280 aa).

It belongs to the KdsA family.

It is found in the cytoplasm. It carries out the reaction D-arabinose 5-phosphate + phosphoenolpyruvate + H2O = 3-deoxy-alpha-D-manno-2-octulosonate-8-phosphate + phosphate. The protein operates within carbohydrate biosynthesis; 3-deoxy-D-manno-octulosonate biosynthesis; 3-deoxy-D-manno-octulosonate from D-ribulose 5-phosphate: step 2/3. It functions in the pathway bacterial outer membrane biogenesis; lipopolysaccharide biosynthesis. In Neisseria meningitidis serogroup C / serotype 2a (strain ATCC 700532 / DSM 15464 / FAM18), this protein is 2-dehydro-3-deoxyphosphooctonate aldolase.